The following is a 1097-amino-acid chain: UPF0746 protein DDB_G0281095 (1097 aa).

Over residues 1-11 (MVNNNKRKEIE) the composition is skewed to basic and acidic residues. Residues 1–24 (MVNNNKRKEIENQENDNDDDNDGL) are disordered. The segment covering 12-22 (NQENDNDDDND) has biased composition (acidic residues). Positions 35–69 (YDSIRSKELQTIAKSLGLPNNGKKQEVYKRIEGYF) constitute an SAP domain. A coiled-coil region spans residues 329-521 (FKEIREIHQQ…QLILELNEIQ (193 aa)).

It belongs to the UPF0746 family.

This chain is UPF0746 protein DDB_G0281095, found in Dictyostelium discoideum (Social amoeba).